A 522-amino-acid chain; its full sequence is 2-isopropylmalate synthase (522 aa).

In terms of domain architecture, Pyruvate carboxyltransferase spans 5–267 (VIIFDTTLRD…ETGINAKEIH (263 aa)). The Mn(2+) site is built by Asp-14, His-202, His-204, and Asn-238. The interval 392–522 (QLQQLVVQSD…MQKNRELGGV (131 aa)) is regulatory domain.

Belongs to the alpha-IPM synthase/homocitrate synthase family. LeuA type 1 subfamily. Homodimer. Mn(2+) serves as cofactor.

It localises to the cytoplasm. It catalyses the reaction 3-methyl-2-oxobutanoate + acetyl-CoA + H2O = (2S)-2-isopropylmalate + CoA + H(+). Its pathway is amino-acid biosynthesis; L-leucine biosynthesis; L-leucine from 3-methyl-2-oxobutanoate: step 1/4. Catalyzes the condensation of the acetyl group of acetyl-CoA with 3-methyl-2-oxobutanoate (2-ketoisovalerate) to form 3-carboxy-3-hydroxy-4-methylpentanoate (2-isopropylmalate). In Shewanella baltica (strain OS223), this protein is 2-isopropylmalate synthase.